The following is a 498-amino-acid chain: Probable FAD-binding monooxygenase AlmA (498 aa).

The helical transmembrane segment at 4–24 threads the bilayer; that stretch reads HIDILIVGAGISGIGIAAHLS. FAD contacts are provided by serine 15, glutamate 36, aspartate 56, phenylalanine 62, and valine 104. 54–56 contributes to the NADP(+) binding site; that stretch reads RSD. Residues 184-190, 208-209, and 292-293 contribute to the NADP(+) site; these read SGATAIT, RS, and RL. Valine 395 is an FAD binding site.

This sequence belongs to the FAD-binding monooxygenase family. FAD serves as cofactor.

It localises to the cell membrane. It participates in hydrocarbon metabolism; alkane degradation. In terms of biological role, is able to catalyze the degradation of n-alkanes with C chain lengths of 32 and 36. Probably allows Acinetobacter baylyi strain ADP1 to grow on the long-chain n-alkane dotriacontane (C32H66) as a sole carbon source. The protein is Probable FAD-binding monooxygenase AlmA of Acinetobacter baylyi (strain ATCC 33305 / BD413 / ADP1).